The primary structure comprises 515 residues: Maturase K (515 aa).

Belongs to the intron maturase 2 family. MatK subfamily.

The protein resides in the plastid. Its subcellular location is the chloroplast. Its function is as follows. Usually encoded in the trnK tRNA gene intron. Probably assists in splicing its own and other chloroplast group II introns. The polypeptide is Maturase K (Pinus banksiana (Jack pine)).